The sequence spans 238 residues: Ribosomal RNA small subunit methyltransferase G (238 aa).

S-adenosyl-L-methionine contacts are provided by residues Gly77, Phe82, 128-129, and Arg147; that span reads AE.

This sequence belongs to the methyltransferase superfamily. RNA methyltransferase RsmG family.

It is found in the cytoplasm. Its function is as follows. Specifically methylates the N7 position of guanine in position 535 of 16S rRNA. This Lysinibacillus sphaericus (strain C3-41) protein is Ribosomal RNA small subunit methyltransferase G.